The primary structure comprises 329 residues: Replication factor C small subunit 1 (329 aa).

An ATP-binding site is contributed by 44 to 51 (GPPGTGKT).

The protein belongs to the activator 1 small subunits family. RfcS subfamily. In terms of assembly, heteromultimer composed of small subunits (RfcS) and large subunits (RfcL).

In terms of biological role, part of the RFC clamp loader complex which loads the PCNA sliding clamp onto DNA. This Pyrobaculum aerophilum (strain ATCC 51768 / DSM 7523 / JCM 9630 / CIP 104966 / NBRC 100827 / IM2) protein is Replication factor C small subunit 1.